Here is a 136-residue protein sequence, read N- to C-terminus: Histone H3.3 (136 aa).

The tract at residues 1-41 (MARTKQTARKSTGGKAPRKQLASKAARKSAPVTGGVKKPHR) is disordered. An N6,N6,N6-trimethyllysine; alternate modification is found at lysine 5. N6,N6-dimethyllysine; alternate is present on lysine 5. N6-methyllysine; alternate occurs at positions 5 and 10. Position 10 is an N6-acetyllysine; alternate (lysine 10). Serine 11 is subject to Phosphoserine. At lysine 15 the chain carries N6,N6-dimethyllysine; alternate. Residues lysine 15, lysine 19, lysine 24, lysine 28, and lysine 37 each carry the N6-acetyllysine; alternate modification. Lysine 19, lysine 24, lysine 28, and lysine 37 each carry N6-methyllysine; alternate. An N6,N6,N6-trimethyllysine; alternate mark is found at lysine 28 and lysine 37. 2 positions are modified to N6,N6-dimethyllysine; alternate: lysine 28 and lysine 37. N6-acetyllysine is present on residues lysine 57 and lysine 65. Lysine 80 bears the N6,N6,N6-trimethyllysine; alternate mark. Lysine 80 is modified (N6,N6-dimethyllysine; alternate). Residue lysine 80 is modified to N6-methyllysine; alternate.

The protein belongs to the histone H3 family. In terms of assembly, the nucleosome is a histone octamer containing two molecules each of H2A, H2B, H3 and H4 assembled in one H3-H4 heterotetramer and two H2A-H2B heterodimers. The octamer wraps approximately 147 bp of DNA. Phosphorylated to form H3S10ph. H3S10ph promotes subsequent H3K14ac formation and is required for transcriptional activation through TBP recruitment to the promoters. Post-translationally, mono-, di- and trimethylated by the COMPASS complex to form H3K4me1/2/3. H3K4me activates gene expression by regulating transcription elongation and plays a role in telomere length maintenance. H3K4me enrichment correlates with transcription levels, and occurs in a 5' to 3' gradient with H3K4me3 enrichment at the 5'-end of genes, shifting to H3K4me2 and then H3K4me1. Methylated by SET2 to form H3K36me. H3K36me represses gene expression. Methylated by DOT1 to form H3K79me. H3K79me is required for association of SIR proteins with telomeric regions and for telomeric silencing. The COMPASS-mediated formation of H3K4me2/3 and the DOT1-mediated formation of H3K79me require H2BK123ub1. In terms of processing, acetylation of histone H3 leads to transcriptional activation. H3K14ac formation by GCN5 is promoted by H3S10ph. H3K14ac can also be formed by ESA1. H3K56ac formation occurs predominantly in newly synthesized H3 molecules during G1, S and G2/M of the cell cycle and may be involved in DNA repair.

The protein resides in the nucleus. It localises to the chromosome. In terms of biological role, core component of nucleosome. Nucleosomes wrap and compact DNA into chromatin, limiting DNA accessibility to the cellular machineries which require DNA as a template. Histones thereby play a central role in transcription regulation, DNA repair, DNA replication and chromosomal stability. DNA accessibility is regulated via a complex set of post-translational modifications of histones, also called histone code, and nucleosome remodeling. In Meyerozyma guilliermondii (strain ATCC 6260 / CBS 566 / DSM 6381 / JCM 1539 / NBRC 10279 / NRRL Y-324) (Yeast), this protein is Histone H3.3 (HHT3).